The chain runs to 275 residues: MQNITDSWFVQGMIKATSDAWLKGWDERNGGNLTLRLDETDIAPFAANFHEKPRYIALSQPMPLLANTPFIVTGSGKFFRNVQLDPAANLGVVKIDSDGAGYHILWGLTHDAVPTSELPAHFLSHCERIKATHGKDRVIMHCHATNLIALTYVLENNTALITRKLWEGSTECLVVFPGGVGILPWMVPGTDEIGQATAQEMQKHSLVLWPFHGVFGSGPTLDETFGLIDTAEKSAEVLVKIYSMGGMKQTITREELVALGKRFGVTPLASAVALY.

Residue Glu117 is part of the active site. Residues His141, His143, and His212 each contribute to the Zn(2+) site.

It belongs to the aldolase class II family. RhaD subfamily. As to quaternary structure, homotetramer. Requires Zn(2+) as cofactor.

The protein resides in the cytoplasm. It carries out the reaction L-rhamnulose 1-phosphate = (S)-lactaldehyde + dihydroxyacetone phosphate. It participates in carbohydrate degradation; L-rhamnose degradation; glycerone phosphate from L-rhamnose: step 3/3. Its function is as follows. Catalyzes the reversible cleavage of L-rhamnulose-1-phosphate to dihydroxyacetone phosphate (DHAP) and L-lactaldehyde. In Salmonella paratyphi B (strain ATCC BAA-1250 / SPB7), this protein is Rhamnulose-1-phosphate aldolase.